A 426-amino-acid polypeptide reads, in one-letter code: D-tagatose-1,6-bisphosphate aldolase subunit KbaZ (426 aa).

The protein belongs to the GatZ/KbaZ family. KbaZ subfamily. In terms of assembly, forms a complex with KbaY.

The protein operates within carbohydrate metabolism; D-tagatose 6-phosphate degradation; D-glyceraldehyde 3-phosphate and glycerone phosphate from D-tagatose 6-phosphate: step 2/2. Component of the tagatose-1,6-bisphosphate aldolase KbaYZ that is required for full activity and stability of the Y subunit. Could have a chaperone-like function for the proper and stable folding of KbaY. When expressed alone, KbaZ does not show any aldolase activity. The protein is D-tagatose-1,6-bisphosphate aldolase subunit KbaZ of Shigella flexneri.